A 702-amino-acid chain; its full sequence is Cell adhesion molecule CEACAM5 (702 aa).

The first 34 residues, 1–34 (MESPSAPPHRWCIPWQRLLLTASLLTFWNPPTTA), serve as a signal peptide directing secretion. Residues 35-144 (KLTIESTPFN…TGQFRVYPEL (110 aa)) form the Ig-like V-type domain. Residues Asn-104, Asn-115, Asn-152, Asn-182, Asn-197, Asn-204, Asn-208, Asn-246, Asn-256, Asn-274, Asn-288, Asn-292, Asn-309, Asn-330, Asn-351, Asn-360, Asn-375, Asn-432, Asn-466, Asn-480, Asn-508, Asn-529, Asn-553, Asn-560, Asn-580, Asn-612, Asn-650, and Asn-665 are each glycosylated (N-linked (GlcNAc...) asparagine). 6 Ig-like C2-type domains span residues 145 to 232 (PKPS…VILN), 240 to 315 (PTIS…TVTT), 323 to 410 (PKPF…VILN), 418 to 495 (PTIS…KTIT), 501 to 588 (PKPS…VTLD), and 593 to 675 (PDTP…ITVS). Cys-167 and Cys-215 are oxidised to a cystine. A disulfide bond links Cys-259 and Cys-299. Cysteines 345 and 393 form a disulfide. An intrachain disulfide couples Cys-437 to Cys-477. Residues Cys-523 and Cys-571 are joined by a disulfide bond. Cys-615 and Cys-655 are joined by a disulfide. The GPI-anchor amidated alanine moiety is linked to residue Ala-685. Residues 686 to 702 (GATVGIMIGVLVGVALI) constitute a propeptide, removed in mature form.

Belongs to the immunoglobulin superfamily. CEA family. In terms of assembly, homodimer. Complex immunoreactive glycoprotein with a MW of 180 kDa comprising 60% carbohydrate. Expressed in columnar epithelial and goblet cells of the colon (at protein level). Found in adenocarcinomas of endodermally derived digestive system epithelium and fetal colon.

The protein resides in the cell membrane. The protein localises to the apical cell membrane. It localises to the cell surface. Cell surface glycoprotein that plays a role in cell adhesion, intracellular signaling and tumor progression. Mediates homophilic and heterophilic cell adhesion with other carcinoembryonic antigen-related cell adhesion molecules, such as CEACAM6. Plays a role as an oncogene by promoting tumor progression; induces resistance to anoikis of colorectal carcinoma cells. Its function is as follows. (Microbial infection) Receptor for E.coli Dr adhesins. Binding of E.coli Dr adhesins leads to dissociation of the homodimer. The chain is Cell adhesion molecule CEACAM5 from Homo sapiens (Human).